A 403-amino-acid chain; its full sequence is Tyrosine--tRNA ligase (403 aa).

The 'HIGH' region signature appears at 42 to 51; it reads PTAPDLHLGH. A 'KMSKS' region motif is present at residues 226 to 230; that stretch reads KMSKS. Lysine 229 lines the ATP pocket. The region spanning 339-400 is the S4 RNA-binding domain; sequence LRIASLLTAA…GKRNFARVSL (62 aa).

It belongs to the class-I aminoacyl-tRNA synthetase family. TyrS type 2 subfamily. As to quaternary structure, homodimer.

The protein resides in the cytoplasm. It catalyses the reaction tRNA(Tyr) + L-tyrosine + ATP = L-tyrosyl-tRNA(Tyr) + AMP + diphosphate + H(+). Functionally, catalyzes the attachment of tyrosine to tRNA(Tyr) in a two-step reaction: tyrosine is first activated by ATP to form Tyr-AMP and then transferred to the acceptor end of tRNA(Tyr). The protein is Tyrosine--tRNA ligase of Xanthomonas oryzae pv. oryzae (strain MAFF 311018).